Reading from the N-terminus, the 220-residue chain is MKTFLIFALLAMAATMATAQFDPSEQYQPYPEQQQPILQQQQMLLQQQQQMLLQQQPLLQVLQQQLNPCRQFLVQQCSPVAVVPFLRSQILQQSSCQVMRQQCCRQLEQIPEQLRCPAIHSVVQAIIMQQQQFFQPQMQQQFFQPQMQQVTQGIFQPQMQQVTQGIFQPQLQQVTQGIFQPQMQGQIEGMRAFALQALPAMCDVYVPPHCPVATAPLGGF.

The signal sequence occupies residues 1–19 (MKTFLIFALLAMAATMATA). Glutamine 20 bears the Pyrrolidone carboxylic acid mark. A run of 2 repeats spans residues 41–48 (QQMLLQQQ) and 49–56 (QQMLLQQQ). Residues 41-56 (QQMLLQQQQQMLLQQQ) are 2 X 8 AA tandem repeats of Q-Q-M-L-L-Q-Q-Q. 4 cysteine pairs are disulfide-bonded: cysteine 69–cysteine 202, cysteine 77–cysteine 96, cysteine 103–cysteine 104, and cysteine 116–cysteine 210. A 2-1 repeat occupies 128–137 (MQQQQFFQPQ). Residues 128 to 146 (MQQQQFFQPQMQQQFFQPQ) form a 2 X 10 AA tandem repeats of M-Q-Q-Q-Q-F-F-Q-P-Q region. One copy of the 2-2; approximate repeat lies at 138–146 (MQQQFFQPQ).

This sequence belongs to the gliadin/glutenin family. As to quaternary structure, monomer.

It is found in the vacuole. In terms of biological role, seed storage protein. Serves as a source of nitrogen, carbon, and sulfur for the young developing seedling. The polypeptide is Avenin-3 (Avena sativa (Oat)).